A 416-amino-acid chain; its full sequence is Transcription factor LATE FLOWERING (416 aa).

Low complexity-rich tracts occupy residues 176–186 (STTTTTTALPP) and 200–212 (TSPTTKTTTTSET). 2 disordered regions span residues 176 to 226 (STTT…AGGS) and 276 to 311 (LGGPASASDPSSRPPPPPQRPRRKNVRISSDPQTVA). A basic motif; degenerate region spans residues 303 to 316 (ISSDPQTVAARLRR). A bHLH domain is found at 303–352 (ISSDPQTVAARLRRERVSERLRVLQRLVPGGSKMDTATMLDEAASYLKFL). Positions 317-352 (ERVSERLRVLQRLVPGGSKMDTATMLDEAASYLKFL) are helix-loop-helix motif.

This sequence belongs to the bHLH protein family. Interacts with PIL13 and PIL15.

The protein resides in the nucleus. In terms of biological role, transcription factor involved in the negative regulation of flowering. May be involved in the repression of the flowering factor GI and HD1 by interacting with PIL13 and PIL15 and competing with PRR1. Possesses transactivation activity in yeast. The protein is Transcription factor LATE FLOWERING of Oryza sativa subsp. japonica (Rice).